A 1386-amino-acid polypeptide reads, in one-letter code: X-linked retinitis pigmentosa GTPase regulator homolog (1386 aa).

Disordered regions lie at residues 1–25 (MFFK…TSSE), 37–56 (AGAR…KARR), and 730–760 (MPQM…PEQH). The segment covering 9-25 (SRKTSANSSSDTSTSSE) has biased composition (low complexity). Residues 45–56 (SVHRQSGKKARR) are compositionally biased toward basic residues. RCC1 repeat units lie at residues 737 to 787 (SKRS…VLSS), 788 to 838 (SGQL…FICS), 839 to 891 (DGSL…VLTD), and 893 to 943 (GRVL…CITE). The disordered stretch occupies residues 972–994 (LKNTEDPSSPSPSTNGSTPRVNL). RCC1 repeat units follow at residues 1034–1085 (EGTL…ASTD) and 1087–1139 (GSVF…FVQK).

Functionally, could be a guanine-nucleotide releasing factor for glo-1. May play a role in gut granule biogenesis. Regulates axon termination in PLM and ALM neurons. This chain is X-linked retinitis pigmentosa GTPase regulator homolog (glo-4), found in Caenorhabditis elegans.